We begin with the raw amino-acid sequence, 309 residues long: uncharacterized protein (309 aa).

This is an uncharacterized protein from Bacillus subtilis (strain 168).